Reading from the N-terminus, the 273-residue chain is Kit ligand (273 aa).

Positions 1 to 25 (MKKTQTWIITCIYLQLLLFNPLVKT) are cleaved as a signal peptide. Gln-26 bears the Pyrrolidone carboxylic acid mark. At 26-214 (QEICRNPVTD…AKSPEDPGLQ (189 aa)) the chain is on the extracellular side. Disulfide bonds link Cys-29–Cys-114 and Cys-68–Cys-163. The N-linked (GlcNAc...) asparagine; partial glycan is linked to Asn-90. Asn-145 is a glycosylation site (N-linked (GlcNAc...) asparagine). Ser-167 is a glycosylation site (O-linked (GalNAc...) serine). O-linked (GalNAc...) threonine glycosylation is found at Thr-168 and Thr-180. Residues 190-211 (ASSLRNDSSSSNRKAAKSPEDP) form a disordered region. The span at 191 to 202 (SSLRNDSSSSNR) shows a compositional bias: low complexity. Asn-195 carries N-linked (GlcNAc...) asparagine glycosylation. A helical membrane pass occupies residues 215–237 (WTAMALPALISLVIGFAFGALYW). Over 238 to 273 (KKKQSSLTRAVENIQINEEDNEISMLQQKEREFQEV) the chain is Cytoplasmic.

This sequence belongs to the SCF family. In terms of assembly, homodimer, non-covalently linked. Heterotetramer with KIT, binding two KIT molecules; thereby mediates KIT dimerization and subsequent activation by autophosphorylation. In terms of processing, a soluble form is produced by proteolytic processing of isoform 1 in the extracellular domain. Post-translationally, the identity of N- and O-linked saccharides is not reported in PubMed:1708771. The O-linked polysaccharides are probably the mucin type linked to GalNAc.

Its subcellular location is the cell membrane. The protein resides in the cytoplasm. The protein localises to the cytoskeleton. It is found in the cell projection. It localises to the lamellipodium. Its subcellular location is the filopodium. The protein resides in the secreted. In terms of biological role, ligand for the receptor-type protein-tyrosine kinase KIT. Plays an essential role in the regulation of cell survival and proliferation, hematopoiesis, stem cell maintenance, gametogenesis, mast cell development, migration and function, and in melanogenesis. KITLG/SCF binding can activate several signaling pathways. Promotes phosphorylation of PIK3R1, the regulatory subunit of phosphatidylinositol 3-kinase, and subsequent activation of the kinase AKT1. KITLG/SCF and KIT also transmit signals via GRB2 and activation of RAS, RAF1 and the MAP kinases MAPK1/ERK2 and/or MAPK3/ERK1. KITLG/SCF and KIT promote activation of STAT family members STAT1, STAT3 and STAT5. KITLG/SCF and KIT promote activation of PLCG1, leading to the production of the cellular signaling molecules diacylglycerol and inositol 1,4,5-trisphosphate. KITLG/SCF acts synergistically with other cytokines, probably interleukins. This chain is Kit ligand (Kitlg), found in Rattus norvegicus (Rat).